The primary structure comprises 356 residues: Cytochrome b translation regulator cbp7 (356 aa).

Component of a complex, at least composed of cbp7 and cbp8.

The protein resides in the mitochondrion. Translation factor for cob1/cytochrome b; plays a role in cob1 mRNA stabilization and required for correct folding of the protein. In Schizosaccharomyces pombe (strain 972 / ATCC 24843) (Fission yeast), this protein is Cytochrome b translation regulator cbp7.